A 409-amino-acid polypeptide reads, in one-letter code: Glycoprotein 55 (409 aa).

The signal sequence occupies residues 1 to 32 (MKGPAFSKPLKDKINPWGPLIVLGILIRAGVS). Residues 33 to 384 (VQHDSPHQVF…SFNRSPWFTT (352 aa)) lie on the Virion surface side of the membrane. N-linked (GlcNAc...) asparagine; by host glycosylation is found at N43 and N58. The disordered stretch occupies residues 254–280 (PRPPQPPPTGAASMVPGTAPPSQQPGT). N-linked (GlcNAc...) asparagine; by host glycosylation is found at N296 and N328. The helical transmembrane segment at 385-405 (LISTIMGLLIILLLLLILLLW) threads the bilayer. At 406-409 (TLHS) the chain is on the intravirion side.

In terms of assembly, homooligomer. Forms heterooligomers with mouse EPOR, probably via their respective transmembrane domains. Forms covalent heterodimers with mouse MST1R isoform sf-Stk, probably via disulfide bonds.

It localises to the host endoplasmic reticulum membrane. The protein resides in the host cell membrane. The protein localises to the virion membrane. This envelope-like membrane glycoprotein is responsible for ligand-independent activation of the erythropoietin receptor EPOR leading to the abnormally rapid proliferation of erythroid precursor cells. In the first stage of Friend disease, constitutive activation of EPOR by gp55 causes uncontrolled, polyclonal proliferation of infected erythroblasts, leading to polycythemia (massive increase in the number of mature red cells). Host susceptibility to SSFV-induced erythroblastosis depends on the expression of the truncated isoform of MST1R receptor tyrosine kinase (MST1R isoform sf-Stk). Interaction with SSFV gp 55 results in constitutive tyrosine phosphorylation and activation of MST1R isoform sf-Stk. In Mus musculus (Mouse), this protein is Glycoprotein 55 (env).